The primary structure comprises 829 residues: 1,4-alpha-glucan branching enzyme GlgB (829 aa).

Residue Asp405 is the Nucleophile of the active site. Catalysis depends on Glu458, which acts as the Proton donor. Positions Ala758 to Ala829 are disordered. 2 stretches are compositionally biased toward low complexity: residues Val778–Val789 and Val810–Thr820.

The protein belongs to the glycosyl hydrolase 13 family. GlgB subfamily. As to quaternary structure, monomer.

The catalysed reaction is Transfers a segment of a (1-&gt;4)-alpha-D-glucan chain to a primary hydroxy group in a similar glucan chain.. It functions in the pathway glycan biosynthesis; glycogen biosynthesis. In terms of biological role, catalyzes the formation of the alpha-1,6-glucosidic linkages in glycogen by scission of a 1,4-alpha-linked oligosaccharide from growing alpha-1,4-glucan chains and the subsequent attachment of the oligosaccharide to the alpha-1,6 position. The chain is 1,4-alpha-glucan branching enzyme GlgB from Actinobacillus succinogenes (strain ATCC 55618 / DSM 22257 / CCUG 43843 / 130Z).